We begin with the raw amino-acid sequence, 146 residues long: Ribonuclease H (146 aa).

One can recognise an RNase H type-1 domain in the interval Glu4–Ser145. Mg(2+) is bound by residues Asp13, Glu51, Asp73, and Asp137.

This sequence belongs to the RNase H family. Monomer. Mg(2+) is required as a cofactor.

It is found in the cytoplasm. It carries out the reaction Endonucleolytic cleavage to 5'-phosphomonoester.. Functionally, endonuclease that specifically degrades the RNA of RNA-DNA hybrids. The protein is Ribonuclease H of Ehrlichia canis (strain Jake).